A 594-amino-acid polypeptide reads, in one-letter code: Chitooligosaccharidolytic beta-N-acetylglucosaminidase (594 aa).

Positions 1-22 (MWSRRIPLFIFGVLVLILSVAA) are cleaved as a signal peptide. 2 disulfide bridges follow: Cys-31/Cys-59 and Cys-36/Cys-55. Asn-164 is a glycosylation site (N-linked (GlcNAc...) asparagine). Residues Asp-249 and His-303 each act as charge relay system in the active site. Disulfide bonds link Cys-316-Cys-373 and Cys-326-Cys-331. Glu-368 functions as the Charge relay system in the catalytic mechanism. Asn-375 carries N-linked (GlcNAc...) asparagine glycosylation. 2 disulfide bridges follow: Cys-478–Cys-491 and Cys-585–Cys-592.

Belongs to the glycosyl hydrolase 20 family. As to quaternary structure, homodimer.

It catalyses the reaction Hydrolysis of terminal non-reducing N-acetyl-D-hexosamine residues in N-acetyl-beta-D-hexosaminides.. Inhibited by O-(2-acetamido-2-deoxy-D-glucopyransylidene)-amino-N-phenylcarbamate (PUGNAc). Inhibited by thiabendazole (TMG)-chitotriomycin. Inhibited by 6-(dimethylamino)-2-(2-(((5-methyl-1,3,4-thiadiazol-2-yl)methyl)amino)ethyl)- 1H-benzo[de]isoquinoline-1,3(2H)-dione (Q2), a synthesized non-carbohydrate unsymmetrical dyad of naphthalimide and thiadiazole having a dimethylamino group at C4 of the naphthalimide. Inhibited poorly by N-acetyl-glucosamine (NAG)-thiazoline (NGT), but when the thiazoline ring of NGT is replaced by a bulky substituent such as in compound 1,2-dideoxy-2'-methylamino-alpha-D-glucopyranoso-[2,1-d]-Delta2'-thiazoline (NMAGT), the inhibition constant Ki is lowered 600-fold compared to that of NGT. Inhibited by berberine, berberine analogs thalifendine and palmatine, and berberine derivative SYSU-1, but not by berberine analog tetrahydroberberine. In terms of biological role, hydrolyzes one beta-GlcNAc unit at a time from the non-reducing ends of substrates, with a preference for shorter substrates. The 2-acetamido group and the beta-glycoside bond linkage in the substrate are required for its activity. Active with p-nitrophenyl (pNP)-beta-GlcNAc, pNP-beta-GalNAc and chitooligosaccharides (degree of polymerization from 2 to 6), but not with the complex N-glycan substrate (GlcNAcbeta-1,2Manalpha-1,6)(GlcNAcbeta-1,2Manalpha-1,3)Manbeta-1,4GlcNAcbeta-1,4GlcNAc-PA (GnGn-PA), pNP-alpha-GlcNAc or with the long polymer colloidal chitin. Involved in chitin catabolism. Involved in the degradation of old cuticle during the pupation stage. The sequence is that of Chitooligosaccharidolytic beta-N-acetylglucosaminidase from Ostrinia furnacalis (Asian corn borer).